We begin with the raw amino-acid sequence, 327 residues long: Alkene monooxygenase system, ferredoxin--NAD(+) reductase component (327 aa).

The 2Fe-2S ferredoxin-type domain occupies Met1–Asp89. The [2Fe-2S] cluster site is built by Cys32, Cys37, Cys40, and Cys73. The 99-residue stretch at Pro96–Arg194 folds into the FAD-binding FR-type domain.

Belongs to the bacterial ring-hydroxylating dioxygenase ferredoxin reductase family. In terms of assembly, monomer. The alkene monooxygenase multicomponent enzyme system is composed of an electron transfer component and a monooxygenase component interacting with the effector protein XamoD. The electron transfer component is composed of a ferredoxin reductase (XamoF) and a ferredoxin (XamoC), and the monooxygenase component is formed by a heterohexamer (dimer of heterotrimers) of two alpha subunits (XamoA), two beta subunits (XamoE) and two gamma subunits (XamoB). FAD is required as a cofactor. It depends on [2Fe-2S] cluster as a cofactor.

It localises to the cytoplasm. The enzyme catalyses 2 reduced [2Fe-2S]-[ferredoxin] + NAD(+) + H(+) = 2 oxidized [2Fe-2S]-[ferredoxin] + NADH. Functionally, reductase component of the alkene monooxygenase multicomponent enzyme system which catalyzes the O2- and NADH-dependent epoxidation of short chain (C2 to C6) alkenes to their corresponding epoxides. Ferredoxin reductase catalyzes the transfer of electrons from NADH to ferredoxin (XamoC). NADPH is also effective but with a rate approximately 3-fold lower than with NADH. The chain is Alkene monooxygenase system, ferredoxin--NAD(+) reductase component from Xanthobacter autotrophicus (strain ATCC BAA-1158 / Py2).